Here is a 398-residue protein sequence, read N- to C-terminus: Phosphoglycerate kinase (398 aa).

Substrate is bound by residues 23–25 (DFN), arginine 38, 61–64 (HMGK), arginine 122, and arginine 155. Residues lysine 206, glycine 297, glutamate 328, and 354 to 357 (GGDS) each bind ATP.

Belongs to the phosphoglycerate kinase family. Monomer.

Its subcellular location is the cytoplasm. It carries out the reaction (2R)-3-phosphoglycerate + ATP = (2R)-3-phospho-glyceroyl phosphate + ADP. It participates in carbohydrate degradation; glycolysis; pyruvate from D-glyceraldehyde 3-phosphate: step 2/5. In Clostridium botulinum (strain Okra / Type B1), this protein is Phosphoglycerate kinase.